The following is a 145-amino-acid chain: 3-hydroxyacyl-[acyl-carrier-protein] dehydratase FabZ (145 aa).

His-48 is an active-site residue.

This sequence belongs to the thioester dehydratase family. FabZ subfamily.

The protein resides in the cytoplasm. It carries out the reaction a (3R)-hydroxyacyl-[ACP] = a (2E)-enoyl-[ACP] + H2O. Functionally, involved in unsaturated fatty acids biosynthesis. Catalyzes the dehydration of short chain beta-hydroxyacyl-ACPs and long chain saturated and unsaturated beta-hydroxyacyl-ACPs. The protein is 3-hydroxyacyl-[acyl-carrier-protein] dehydratase FabZ of Marinobacter nauticus (strain ATCC 700491 / DSM 11845 / VT8) (Marinobacter aquaeolei).